The sequence spans 100 residues: Small ribosomal subunit protein uS14c (100 aa).

The protein belongs to the universal ribosomal protein uS14 family. Part of the 30S ribosomal subunit.

Its subcellular location is the plastid. The protein localises to the chloroplast. Binds 16S rRNA, required for the assembly of 30S particles. In Platanus occidentalis (Sycamore), this protein is Small ribosomal subunit protein uS14c.